The following is a 201-amino-acid chain: Casparian strip membrane protein 4 (201 aa).

Residues 1–23 are disordered; it reads MEGKAAVTTSTEHGDGEASRTAA. Residues 1–41 are Cytoplasmic-facing; sequence MEGKAAVTTSTEHGDGEASRTAARTVVSGSSRGGAASRALS. A helical transmembrane segment spans residues 42 to 62; sequence VADLILRVVAVVAIVDSAIAM. Topologically, residues 63–87 are extracellular; it reads GTTNQTLPFFTQFLRFKAQYSDLPT. The N-linked (GlcNAc...) asparagine glycan is linked to Asn-66. A helical membrane pass occupies residues 88–108; sequence LTLFVVANSAVTAYLVLSIPL. At 109–122 the chain is on the cytoplasmic side; that stretch reads SVVHIIRSRASYSR. Residues 123-143 form a helical membrane-spanning segment; the sequence is LVLIFLDSVMLALVAAVASAS. The Extracellular segment spans residues 144–172; that stretch reads AAIVYLAHKGNVRANWFAVCQQFDSFCER. The helical transmembrane segment at 173 to 193 threads the bilayer; the sequence is ISGPLIGSFAAMAVLLLLVLL. The Cytoplasmic segment spans residues 194–201; sequence SAAALARR.

It belongs to the Casparian strip membrane proteins (CASP) family. As to quaternary structure, homodimer and heterodimers.

It localises to the cell membrane. Its function is as follows. Regulates membrane-cell wall junctions and localized cell wall deposition. Required for establishment of the Casparian strip membrane domain (CSD) and the subsequent formation of Casparian strips, a cell wall modification of the root endodermis that determines an apoplastic barrier between the intraorganismal apoplasm and the extraorganismal apoplasm and prevents lateral diffusion. This is Casparian strip membrane protein 4 from Oryza sativa subsp. japonica (Rice).